A 274-amino-acid chain; its full sequence is Dermonecrotic toxin LcsSicTox-betaIC1 (274 aa).

The active site involves H5. 2 residues coordinate Mg(2+): E25 and D27. The active-site Nucleophile is the H41. Intrachain disulfides connect C45-C51 and C47-C190. N-linked (GlcNAc...) asparagine glycosylation is present at N66. D85 contacts Mg(2+).

It belongs to the arthropod phospholipase D family. Class II subfamily. Mg(2+) serves as cofactor. In terms of tissue distribution, expressed by the venom gland.

Its subcellular location is the secreted. It carries out the reaction an N-(acyl)-sphingosylphosphocholine = an N-(acyl)-sphingosyl-1,3-cyclic phosphate + choline. The catalysed reaction is an N-(acyl)-sphingosylphosphoethanolamine = an N-(acyl)-sphingosyl-1,3-cyclic phosphate + ethanolamine. It catalyses the reaction a 1-acyl-sn-glycero-3-phosphocholine = a 1-acyl-sn-glycero-2,3-cyclic phosphate + choline. The enzyme catalyses a 1-acyl-sn-glycero-3-phosphoethanolamine = a 1-acyl-sn-glycero-2,3-cyclic phosphate + ethanolamine. Functionally, dermonecrotic toxins cleave the phosphodiester linkage between the phosphate and headgroup of certain phospholipids (sphingolipid and lysolipid substrates), forming an alcohol (often choline) and a cyclic phosphate. This toxin acts on sphingomyelin (SM). It may also act on ceramide phosphoethanolamine (CPE), lysophosphatidylcholine (LPC) and lysophosphatidylethanolamine (LPE), but not on lysophosphatidylserine (LPS), and lysophosphatidylglycerol (LPG). It acts by transphosphatidylation, releasing exclusively cyclic phosphate products as second products. Induces dermonecrosis, hemolysis, increased vascular permeability, edema, inflammatory response, and platelet aggregation. The protein is Dermonecrotic toxin LcsSicTox-betaIC1 of Loxosceles cf. spinulosa (strain GJB-2008) (Recluse spider).